The chain runs to 506 residues: Trans-cinnamate 4-monooxygenase (506 aa).

A helical membrane pass occupies residues 3–23 (LLLLEKTLLALFIAATIAVTI). Residues 213–218 (RSRLAQ) and Ala307 each bind (E)-cinnamate. Cys448 lines the heme pocket.

This sequence belongs to the cytochrome P450 family. It depends on heme as a cofactor.

The protein localises to the membrane. It carries out the reaction (E)-cinnamate + reduced [NADPH--hemoprotein reductase] + O2 = (E)-4-coumarate + oxidized [NADPH--hemoprotein reductase] + H2O + H(+). It functions in the pathway phenylpropanoid metabolism; trans-4-coumarate biosynthesis; trans-4-coumarate from trans-cinnamate: step 1/1. Catalyzes the first oxidative step of the phenylpropanoid pathway in higher plants by transforming trans-cinnamate into p-coumarate. The compounds formed by this pathway are essential components for lignification, pollination, and defense against ultraviolet light, predators and pathogens. The polypeptide is Trans-cinnamate 4-monooxygenase (CYP73A3) (Medicago sativa (Alfalfa)).